The primary structure comprises 263 residues: Polyglutamine-binding protein 1 (263 aa).

Residues 46 to 80 form the WW domain; that stretch reads EGLPPSWYKVFDPSCGLPYYWNVETDLVSWLSPHD. A disordered region spans residues 94 to 263; the sequence is NSNADAEDKS…AEASRSKQQD (170 aa). Residues 99 to 173 show a composition bias toward basic and acidic residues; it reads AEDKSERNLE…DKADREDGKD (75 aa). The stretch at 104-110 is one 1-1; approximate repeat; that stretch reads ERNLEKV. Residues 104-138 are 5 X 7 AA approximate tandem repeats of D-R-[NS]-H-E-K-S; that stretch reads ERNLEKVDRNHEKSDRSHEKPDRSHEKADRNHEKS. A 1-2 repeat occupies 111-117; sequence DRNHEKS. The stretch at 118–124 is one 1-3; approximate repeat; it reads DRSHEKP. The 1-4; approximate repeat unit spans residues 125 to 131; sequence DRSHEKA. A run of 10 repeats spans residues 132–138, 139–140, 141–142, 143–144, 150–151, 152–153, 154–155, 156–157, 158–159, and 160–161. The 3 X 2 AA tandem repeats of [DE]-R stretch occupies residues 139-144; the sequence is DRERER. Positions 150–161 are 6 X 2 AA tandem repeats of [DE]-R; it reads DRERDRDRERER. The tract at residues 243-253 is important for interaction with TXNL4A; it reads YPSPGAVLRAN. A Phosphoserine modification is found at Ser245.

In terms of assembly, interacts with POU3F2/Brn-2, ATXN1, TXNL4A, HTT and AR. Interaction with ATXN1 correlates positively with the length of the polyglutamine tract. Interacts with RNA polymerase II large subunit in a phosphorylation-dependent manner. Forms a ternary complex with ATXN1 mutant and phosphorylated RNA polymerase II. Interacts (via C-terminus) with TXNL4A and CD2BP2. Interacts (via WW domain) with ATN1 and SF3B1, and may interact with additional splice factors. Interacts (via WW domain) with WBP11; Leading to reduce interaction between PQBP1 and TXNL4A. Interacts with CAPRIN1. Interacts with DDX1. Interacts with SFPQ. Interacts with KHSRP.

It is found in the nucleus. It localises to the nucleus speckle. The protein localises to the cytoplasmic granule. Functionally, intrinsically disordered protein that acts as a scaffold, and which is involved in different processes, such as pre-mRNA splicing, transcription regulation, innate immunity and neuron development. Interacts with splicing-related factors via the intrinsically disordered region and regulates alternative splicing of target pre-mRNA species. May suppress the ability of POU3F2 to transactivate the DRD1 gene in a POU3F2 dependent manner. Can activate transcription directly or via association with the transcription machinery. May be involved in ATXN1 mutant-induced cell death. The interaction with ATXN1 mutant reduces levels of phosphorylated RNA polymerase II large subunit. Involved in the assembly of cytoplasmic stress granule, possibly by participating in the transport of neuronal RNA granules. Also acts as an innate immune sensor of infection by retroviruses, by detecting the presence of reverse-transcribed DNA in the cytosol. Directly binds retroviral reverse-transcribed DNA in the cytosol and interacts with CGAS, leading to activate the cGAS-STING signaling pathway, triggering type-I interferon production. The chain is Polyglutamine-binding protein 1 (Pqbp1) from Rattus norvegicus (Rat).